A 146-amino-acid chain; its full sequence is Large ribosomal subunit protein eL32 (146 aa).

The protein belongs to the eukaryotic ribosomal protein eL32 family.

The sequence is that of Large ribosomal subunit protein eL32 (rpl32e) from Methanocaldococcus jannaschii (strain ATCC 43067 / DSM 2661 / JAL-1 / JCM 10045 / NBRC 100440) (Methanococcus jannaschii).